A 553-amino-acid chain; its full sequence is Arginine--tRNA ligase (553 aa).

A 'HIGH' region motif is present at residues 130–140; it reads ANPTGDLHIGH.

This sequence belongs to the class-I aminoacyl-tRNA synthetase family. Monomer.

Its subcellular location is the cytoplasm. It carries out the reaction tRNA(Arg) + L-arginine + ATP = L-arginyl-tRNA(Arg) + AMP + diphosphate. The chain is Arginine--tRNA ligase from Staphylococcus epidermidis (strain ATCC 35984 / DSM 28319 / BCRC 17069 / CCUG 31568 / BM 3577 / RP62A).